The sequence spans 317 residues: SVP1-like protein 2 (317 aa).

2 WD repeats span residues 119–159 and 164–203; these read AHST…KMAE and VDHA…NAPY.

This sequence belongs to the WD repeat PROPPIN family.

The protein localises to the vacuole membrane. It is found in the cytoplasmic vesicle membrane. Its function is as follows. Involved in mitochondrial or peroxisomal functions and amino acid signaling pathways. In Emericella nidulans (strain FGSC A4 / ATCC 38163 / CBS 112.46 / NRRL 194 / M139) (Aspergillus nidulans), this protein is SVP1-like protein 2 (hsv2).